The chain runs to 33 residues: Dermaseptin-J7 (33 aa).

Val-33 bears the Valine amide mark.

In terms of tissue distribution, expressed by the skin glands.

It is found in the secreted. Has antimicrobial activity. This chain is Dermaseptin-J7, found in Phasmahyla jandaia (Jandaia leaf frog).